A 250-amino-acid chain; its full sequence is Phosphoribosylaminoimidazole-succinocarboxamide synthase (250 aa).

Belongs to the SAICAR synthetase family.

The enzyme catalyses 5-amino-1-(5-phospho-D-ribosyl)imidazole-4-carboxylate + L-aspartate + ATP = (2S)-2-[5-amino-1-(5-phospho-beta-D-ribosyl)imidazole-4-carboxamido]succinate + ADP + phosphate + 2 H(+). It functions in the pathway purine metabolism; IMP biosynthesis via de novo pathway; 5-amino-1-(5-phospho-D-ribosyl)imidazole-4-carboxamide from 5-amino-1-(5-phospho-D-ribosyl)imidazole-4-carboxylate: step 1/2. This chain is Phosphoribosylaminoimidazole-succinocarboxamide synthase, found in Bifidobacterium longum (strain DJO10A).